A 702-amino-acid polypeptide reads, in one-letter code: Phosphoglycerol transferase I (702 aa).

Helical transmembrane passes span 3-25 (WILA…LAWL), 73-95 (GYIA…LRVR), and 102-124 (GGGA…SPLY).

The protein belongs to the OpgB family.

It localises to the cell inner membrane. It carries out the reaction a phosphatidylglycerol + a membrane-derived-oligosaccharide D-glucose = a 1,2-diacyl-sn-glycerol + a membrane-derived-oligosaccharide 6-(glycerophospho)-D-glucose.. It functions in the pathway glycan metabolism; osmoregulated periplasmic glucan (OPG) biosynthesis. In terms of biological role, transfers a phosphoglycerol residue from phosphatidylglycerol to the membrane-bound nascent glucan backbones. The polypeptide is Phosphoglycerol transferase I (Xanthomonas campestris pv. campestris (strain ATCC 33913 / DSM 3586 / NCPPB 528 / LMG 568 / P 25)).